The following is a 698-amino-acid chain: D-(-)-3-hydroxybutyrate oligomer hydrolase (698 aa).

The N-terminal stretch at 1–32 is a signal peptide; sequence MTTIRGGSRRASLPALALLGVLLGACHSDDNA. Ser-310 (charge relay system) is an active-site residue.

The protein belongs to the D-(-)-3-hydroxybutyrate oligomer hydrolase family.

It localises to the secreted. The catalysed reaction is (3R)-hydroxybutanoate dimer + H2O = 2 (R)-3-hydroxybutanoate + H(+). It functions in the pathway lipid metabolism; butanoate metabolism. Participates in the degradation of poly-3-hydroxybutyrate (PHB). It works downstream of poly(3-hydroxybutyrate) depolymerase, hydrolyzing D(-)-3-hydroxybutyrate oligomers of various length (3HB-oligomers) into 3HB-monomers. The chain is D-(-)-3-hydroxybutyrate oligomer hydrolase from Burkholderia thailandensis (strain ATCC 700388 / DSM 13276 / CCUG 48851 / CIP 106301 / E264).